Here is a 60-residue protein sequence, read N- to C-terminus: Large ribosomal subunit protein uL30 (60 aa).

It belongs to the universal ribosomal protein uL30 family. In terms of assembly, part of the 50S ribosomal subunit.

The sequence is that of Large ribosomal subunit protein uL30 from Shewanella baltica (strain OS223).